Reading from the N-terminus, the 954-residue chain is ATPase 9, plasma membrane-type (954 aa).

Topologically, residues Met1–Phe66 are cytoplasmic. A helical transmembrane segment spans residues Leu67–Ile86. Over Ala87–Trp98 the chain is Extracellular. A helical transmembrane segment spans residues Gln99–Glu119. Residues Asn120–Ile248 are Cytoplasmic-facing. A helical transmembrane segment spans residues Gly249–Pro269. Residues Ile270–Gly278 are Extracellular-facing. The chain crosses the membrane as a helical span at residues Ile279–Thr296. Residues Val297–Lys648 lie on the Cytoplasmic side of the membrane. The 4-aspartylphosphate intermediate role is filled by Asp334. 2 residues coordinate Mg(2+): Asp593 and Asp597. The chain crosses the membrane as a helical span at residues Asn649 to Leu670. At Ile671–Asp675 the chain is on the extracellular side. A helical membrane pass occupies residues Phe676–Asp698. Over Arg699–Ile714 the chain is Cytoplasmic. Residues Phe715–Ala735 form a helical membrane-spanning segment. Residues Ala736–His756 lie on the Extracellular side of the membrane. The chain crosses the membrane as a helical span at residues Glu757–Thr777. The Cytoplasmic portion of the chain corresponds to Arg778 to Gly789. Residues Phe790–Ala810 form a helical membrane-spanning segment. At Asn811–Arg818 the chain is on the extracellular side. The helical transmembrane segment at Gly819–Leu839 threads the bilayer. The Cytoplasmic portion of the chain corresponds to Asp840–Leu954. Thr886 carries the phosphothreonine modification. Phosphoserine is present on Ser936. The interval Tyr952–Leu954 is interaction with 14-3-3 proteins. Residue Thr953 is modified to Phosphothreonine.

Belongs to the cation transport ATPase (P-type) (TC 3.A.3) family. Type IIIA subfamily. Binds to 14-3-3 proteins. The binding is induced by phosphorylation of Thr-953. Binding to 14-3-3 proteins activates the H(+)-ATPase. As to expression, anther specific. Expressed in guard cells.

Its subcellular location is the membrane. The catalysed reaction is ATP + H2O + H(+)(in) = ADP + phosphate + 2 H(+)(out). Its function is as follows. The plasma membrane H(+) ATPase of plants and fungi generates a proton gradient that drives the active transport of nutrients by H(+)-symport. The resulting external acidification and/or internal alkinization may mediate growth responses. This chain is ATPase 9, plasma membrane-type (AHA9), found in Arabidopsis thaliana (Mouse-ear cress).